The primary structure comprises 304 residues: Serine protease 30 (304 aa).

Residues 1–21 (MESWARCIFLLLLQILTGGRG) form the signal peptide. The propeptide at 22–30 (DILHSGAGK) is activation peptide. The 241-residue stretch at 31–271 (IVGGQDAPEG…YVDWIQRTLA (241 aa)) folds into the Peptidase S1 domain. Cysteines 57 and 73 form a disulfide. His-72 (charge relay system) is an active-site residue. Asn-79 is a glycosylation site (N-linked (GlcNAc...) asparagine). The active-site Charge relay system is Asp-122. Cystine bridges form between Cys-155–Cys-229, Cys-185–Cys-208, and Cys-219–Cys-247. Ser-223 acts as the Charge relay system in catalysis. Residues Asn-232 and Asn-273 are each glycosylated (N-linked (GlcNAc...) asparagine). The GPI-anchor amidated serine moiety is linked to residue Ser-275. The propeptide at 276 to 304 (DAYGCRSRASGAYPALLLVLLAFALPESL) is removed in mature form.

This sequence belongs to the peptidase S1 family. As to expression, expressed predominantly in kidney, small intestine and stomach and moderately in thymus, lung, spleen, testis and skin. In the kidney, expressed mainly in collecting duct of renal medulla and cortex.

The protein resides in the cell membrane. Inhibited by aprotinin, leupeptin, benzamidine and soybean trypsin inhibitor. Partially inhibited by PMSF and DFP. In terms of biological role, selectively cleaves synthetic peptide substrates of trypsin. Activates the epithelial sodium channel ENaC. This Rattus norvegicus (Rat) protein is Serine protease 30 (Prss30).